Consider the following 218-residue polypeptide: Vacuolar protein-sorting-associated protein 37 homolog 2 (218 aa).

A disordered region spans residues 1–51 (MFNFWGSKEQQQGQSRPSPEASATPWYSPSLVTSPSSSRPQTSGQIPSHVS). The span at 8–17 (KEQQQGQSRP) shows a compositional bias: polar residues. Low complexity predominate over residues 28-40 (SPSLVTSPSSSRP). The VPS37 C-terminal domain occupies 137-218 (QEKLNELENQ…HLAAKTSSIG (82 aa)).

The protein belongs to the VPS37 family. As to quaternary structure, component of the endosomal sorting required for transport complex I (ESCRT-I), composed of ELC, VPS28 and VPS37. Interacts with ELC.

The protein resides in the endosome. In terms of biological role, component of the ESCRT-I complex (endosomal sorting complex required for transport I), a regulator of vesicular trafficking process. Required for the sorting of endocytic ubiquitinated cargos into multivesicular bodies (MVBs). The sequence is that of Vacuolar protein-sorting-associated protein 37 homolog 2 (VPS37-2) from Arabidopsis thaliana (Mouse-ear cress).